The primary structure comprises 391 residues: Heme A synthase (391 aa).

Transmembrane regions (helical) follow at residues 37–57 (IRLW…VGGL), 121–141 (RQLG…FLVA), 152–172 (LLAL…MVAS), 186–206 (LAVH…QALL), 229–249 (TTVL…VAGI), 298–318 (FLHR…WIFG), 332–352 (LLAL…LSAA), and 354–374 (WQVA…ILHA). Residue His300 participates in heme binding. His360 is a binding site for heme.

The protein belongs to the COX15/CtaA family. Type 2 subfamily. In terms of assembly, interacts with CtaB. Heme b serves as cofactor.

The protein resides in the cell membrane. It carries out the reaction Fe(II)-heme o + 2 A + H2O = Fe(II)-heme a + 2 AH2. The protein operates within porphyrin-containing compound metabolism; heme A biosynthesis; heme A from heme O: step 1/1. In terms of biological role, catalyzes the conversion of heme O to heme A by two successive hydroxylations of the methyl group at C8. The first hydroxylation forms heme I, the second hydroxylation results in an unstable dihydroxymethyl group, which spontaneously dehydrates, resulting in the formyl group of heme A. In Cereibacter sphaeroides (strain ATCC 17025 / ATH 2.4.3) (Rhodobacter sphaeroides), this protein is Heme A synthase.